Here is a 494-residue protein sequence, read N- to C-terminus: UDP-N-acetylmuramate--L-alanine ligase (494 aa).

Residue 140-146 (GTHGKTT) participates in ATP binding.

It belongs to the MurCDEF family.

It is found in the cytoplasm. The catalysed reaction is UDP-N-acetyl-alpha-D-muramate + L-alanine + ATP = UDP-N-acetyl-alpha-D-muramoyl-L-alanine + ADP + phosphate + H(+). It participates in cell wall biogenesis; peptidoglycan biosynthesis. Functionally, cell wall formation. The sequence is that of UDP-N-acetylmuramate--L-alanine ligase from Trichormus variabilis (strain ATCC 29413 / PCC 7937) (Anabaena variabilis).